Consider the following 704-residue polypeptide: DNA ligase (704 aa).

NAD(+) contacts are provided by residues 43 to 47 (DADYD), 92 to 93 (SL), and Glu124. Lys126 (N6-AMP-lysine intermediate) is an active-site residue. NAD(+) contacts are provided by Arg147, Glu182, Lys298, and Lys322. 4 residues coordinate Zn(2+): Cys427, Cys430, Cys445, and Cys451. The 80-residue stretch at 625–704 (PVESPIAGKI…DAWLRLIGDA (80 aa)) folds into the BRCT domain.

It belongs to the NAD-dependent DNA ligase family. LigA subfamily. Requires Mg(2+) as cofactor. Mn(2+) is required as a cofactor.

It carries out the reaction NAD(+) + (deoxyribonucleotide)n-3'-hydroxyl + 5'-phospho-(deoxyribonucleotide)m = (deoxyribonucleotide)n+m + AMP + beta-nicotinamide D-nucleotide.. DNA ligase that catalyzes the formation of phosphodiester linkages between 5'-phosphoryl and 3'-hydroxyl groups in double-stranded DNA using NAD as a coenzyme and as the energy source for the reaction. It is essential for DNA replication and repair of damaged DNA. This Cereibacter sphaeroides (strain ATCC 17025 / ATH 2.4.3) (Rhodobacter sphaeroides) protein is DNA ligase.